A 407-amino-acid chain; its full sequence is Phosphopentomutase (407 aa).

Mn(2+) contacts are provided by aspartate 10, aspartate 306, histidine 311, aspartate 347, histidine 348, and histidine 359.

Belongs to the phosphopentomutase family. Mn(2+) serves as cofactor.

The protein resides in the cytoplasm. The enzyme catalyses 2-deoxy-alpha-D-ribose 1-phosphate = 2-deoxy-D-ribose 5-phosphate. It carries out the reaction alpha-D-ribose 1-phosphate = D-ribose 5-phosphate. It participates in carbohydrate degradation; 2-deoxy-D-ribose 1-phosphate degradation; D-glyceraldehyde 3-phosphate and acetaldehyde from 2-deoxy-alpha-D-ribose 1-phosphate: step 1/2. Its function is as follows. Isomerase that catalyzes the conversion of deoxy-ribose 1-phosphate (dRib-1-P) and ribose 1-phosphate (Rib-1-P) to deoxy-ribose 5-phosphate (dRib-5-P) and ribose 5-phosphate (Rib-5-P), respectively. The protein is Phosphopentomutase of Pectobacterium atrosepticum (strain SCRI 1043 / ATCC BAA-672) (Erwinia carotovora subsp. atroseptica).